Here is a 502-residue protein sequence, read N- to C-terminus: 4,4'-diapophytoene desaturase (4,4'-diaponeurosporene-forming) (502 aa).

An FAD-binding site is contributed by 5–17; the sequence is VIGAGVTGLAAAA.

It belongs to the carotenoid/retinoid oxidoreductase family. CrtN subfamily.

The catalysed reaction is 15-cis-4,4'-diapophytoene + 3 FAD + 3 H(+) = all-trans-4,4'-diaponeurosporene + 3 FADH2. It functions in the pathway carotenoid biosynthesis; staphyloxanthin biosynthesis; staphyloxanthin from farnesyl diphosphate: step 2/5. Functionally, involved in the biosynthesis of the yellow-orange carotenoid staphyloxanthin, which plays a role in the virulence via its protective function against oxidative stress. Catalyzes three successive dehydrogenation reactions that lead to the introduction of three double bonds into 4,4'-diapophytoene (dehydrosqualene), with 4,4'-diapophytofluene and 4,4'-diapo-zeta-carotene as intermediates, and 4,4'-diaponeurosporene (the major deep-yellow pigment in staphylococci strains) as the end product. This chain is 4,4'-diapophytoene desaturase (4,4'-diaponeurosporene-forming), found in Staphylococcus aureus (strain COL).